Here is a 607-residue protein sequence, read N- to C-terminus: Chaperone protein HtpG (607 aa).

Positions 1–323 are a; substrate-binding; the sequence is MKKEEKIFKA…CDSLSLNISR (323 aa). The segment at 324–534 is b; it reads EILQQNAELQ…KGGLSLEMEK (211 aa). Positions 535 to 607 are c; it reads TLSEMTNNND…FIKNLNSLIK (73 aa).

It belongs to the heat shock protein 90 family. Homodimer.

It is found in the cytoplasm. In terms of biological role, molecular chaperone. Has ATPase activity. The protein is Chaperone protein HtpG of Fusobacterium nucleatum subsp. nucleatum (strain ATCC 25586 / DSM 15643 / BCRC 10681 / CIP 101130 / JCM 8532 / KCTC 2640 / LMG 13131 / VPI 4355).